Reading from the N-terminus, the 414-residue chain is MTQANLSETLFKPRFKHPETSTLVRRFNHGAQPPVQSALDGKTIPHWYRMINRLMWIWRGIDPREILDVQARIVMSDAERTDDDLYDTVIGYRGGNWIYEWATQAMVWQQKACAEEDPQLSGRHWLHAATLYNIAAYPHLKGDDLAEQAQALSNRAYEEAAQRLPGTMRQMEFTVPGGAPITGFLHMPKGDGPFPTVLMCGGLDAMQTDYYSLYERYFAPRGIAMLTIDMPSVGFSSKWKLTQDSSLLHQHVLKALPNVPWVDHTRVAAFGFRFGANVAVRLAYLESPRLKAVACLGPVVHTLLSDFKCQQQVPEMYLDVLASRLGMHDASDEALRVELNRYSLKVQGLLGRRCPTPMLSGYWKNDPFSPEEDSRLITSSSADGKLLEIPFNPVYRNFDKGLQEITDWIEKRLC.

This sequence belongs to the FrsA family.

The catalysed reaction is a carboxylic ester + H2O = an alcohol + a carboxylate + H(+). In terms of biological role, catalyzes the hydrolysis of esters. The polypeptide is Esterase FrsA (Escherichia coli O7:K1 (strain IAI39 / ExPEC)).